Reading from the N-terminus, the 137-residue chain is Small heat shock protein IbpA (137 aa).

A sHSP domain is found at 28–137 (SQSNGGYPPY…ANKPRRIEIN (110 aa)).

It belongs to the small heat shock protein (HSP20) family. Monomer. Forms homomultimers of about 100-150 subunits at optimal growth temperatures. Conformation changes to monomers at high temperatures or high ionic concentrations.

It localises to the cytoplasm. Its function is as follows. Associates with aggregated proteins, together with IbpB, to stabilize and protect them from irreversible denaturation and extensive proteolysis during heat shock and oxidative stress. Aggregated proteins bound to the IbpAB complex are more efficiently refolded and reactivated by the ATP-dependent chaperone systems ClpB and DnaK/DnaJ/GrpE. Its activity is ATP-independent. This is Small heat shock protein IbpA from Citrobacter koseri (strain ATCC BAA-895 / CDC 4225-83 / SGSC4696).